Reading from the N-terminus, the 73-residue chain is Methionyl-tRNA formyltransferase (73 aa).

The protein belongs to the Fmt family.

It catalyses the reaction L-methionyl-tRNA(fMet) + (6R)-10-formyltetrahydrofolate = N-formyl-L-methionyl-tRNA(fMet) + (6S)-5,6,7,8-tetrahydrofolate + H(+). Attaches a formyl group to the free amino group of methionyl-tRNA(fMet). The formyl group appears to play a dual role in the initiator identity of N-formylmethionyl-tRNA by promoting its recognition by IF2 and preventing the misappropriation of this tRNA by the elongation apparatus. This is Methionyl-tRNA formyltransferase (fmt) from Rickettsia akari.